The following is a 343-amino-acid chain: Small ribosomal subunit biogenesis GTPase RsgA (343 aa).

The CP-type G domain maps to 116 to 275 (RGQLKPVAAN…LIDSPGIREF (160 aa)). GTP-binding positions include 163–166 (NKAD) and 217–225 (GQSGVGKSS). The Zn(2+) site is built by C299, C304, H306, and C312.

It belongs to the TRAFAC class YlqF/YawG GTPase family. RsgA subfamily. Monomer. Associates with 30S ribosomal subunit, binds 16S rRNA. It depends on Zn(2+) as a cofactor.

It localises to the cytoplasm. Its function is as follows. One of several proteins that assist in the late maturation steps of the functional core of the 30S ribosomal subunit. Helps release RbfA from mature subunits. May play a role in the assembly of ribosomal proteins into the subunit. Circularly permuted GTPase that catalyzes slow GTP hydrolysis, GTPase activity is stimulated by the 30S ribosomal subunit. This chain is Small ribosomal subunit biogenesis GTPase RsgA, found in Pseudomonas savastanoi pv. phaseolicola (strain 1448A / Race 6) (Pseudomonas syringae pv. phaseolicola (strain 1448A / Race 6)).